The primary structure comprises 265 residues: Mlc titration factor A (265 aa).

His-111, His-148, His-152, and Glu-211 together coordinate Zn(2+).

This sequence belongs to the MtfA family. Interacts with Mlc. Zn(2+) is required as a cofactor.

It is found in the cytoplasm. In terms of biological role, involved in the modulation of the activity of the glucose-phosphotransferase system (glucose-PTS). Interacts with the transcriptional repressor Mlc, preventing its interaction with DNA and leading to the modulation of expression of genes regulated by Mlc, including ptsG, which encodes the PTS system glucose-specific EIICB component. Shows zinc-dependent metallopeptidase activity. The sequence is that of Mlc titration factor A from Escherichia coli (strain ATCC 8739 / DSM 1576 / NBRC 3972 / NCIMB 8545 / WDCM 00012 / Crooks).